A 335-amino-acid chain; its full sequence is F420-dependent glucose-6-phosphate dehydrogenase 1 (335 aa).

Position 38 (Asp-38) interacts with coenzyme F420-(gamma-Glu)n. The active-site Proton donor is the His-39. Coenzyme F420-(gamma-Glu)n-binding positions include Thr-75 and Thr-106–Gly-107. Residue Glu-108 is the Proton acceptor of the active site. Coenzyme F420-(gamma-Glu)n is bound by residues Asn-111, Gly-176–Gly-177, and Val-179–Val-180. Thr-194, Lys-197, Lys-258, and Arg-282 together coordinate substrate.

Belongs to the F420-dependent glucose-6-phosphate dehydrogenase family. As to quaternary structure, homodimer.

It catalyses the reaction oxidized coenzyme F420-(gamma-L-Glu)(n) + D-glucose 6-phosphate + H(+) = 6-phospho-D-glucono-1,5-lactone + reduced coenzyme F420-(gamma-L-Glu)(n). Catalyzes the coenzyme F420-dependent oxidation of glucose 6-phosphate (G6P) to 6-phosphogluconolactone. The protein is F420-dependent glucose-6-phosphate dehydrogenase 1 of Rhodococcus jostii (strain RHA1).